The primary structure comprises 449 residues: Type 3 secretion system ATPase (449 aa).

178–183 provides a ligand contact to ATP; that stretch reads GCGKTT.

The protein belongs to the ATPase alpha/beta chains family. T3SS ATPase subfamily. As to quaternary structure, the core secretion machinery of the T3SS is composed of approximately 20 different proteins, including cytoplasmic components, a base, an export apparatus and a needle. This subunit is part of the cytosolic complex. Forms homododecamers.

The protein localises to the cytoplasm. It carries out the reaction ATP + H2O + cellular proteinSide 1 = ADP + phosphate + cellular proteinSide 2.. Functionally, ATPase component of the type III secretion system (T3SS), also called injectisome, which is used to inject bacterial effector proteins into eukaryotic host cells. Acts as a molecular motor to provide the energy that is required for the export of proteins. Required for type III secretion apparatus (T3SA) formation, proper protein secretion, host cell invasion and virulence. May play a critical role in T3SS substrate recognition, disassembly of the effector/chaperone complex and unfolding of the effector in an ATP-dependent manner prior to secretion. The protein is Type 3 secretion system ATPase of Pseudomonas syringae pv. tomato (strain ATCC BAA-871 / DC3000).